The primary structure comprises 284 residues: D-tagatose-1,6-bisphosphate aldolase subunit GatY (284 aa).

The active-site Proton donor is Asp82. The Zn(2+) site is built by His83 and His180. Gly181 contacts dihydroxyacetone phosphate. A Zn(2+)-binding site is contributed by His208. Residues 209–211 (GAS) and 230–233 (NVAT) each bind dihydroxyacetone phosphate.

Belongs to the class II fructose-bisphosphate aldolase family. TagBP aldolase GatY subfamily. In terms of assembly, forms a complex with GatZ. Zn(2+) is required as a cofactor.

The catalysed reaction is D-tagatofuranose 1,6-bisphosphate = D-glyceraldehyde 3-phosphate + dihydroxyacetone phosphate. It participates in carbohydrate metabolism; D-tagatose 6-phosphate degradation; D-glyceraldehyde 3-phosphate and glycerone phosphate from D-tagatose 6-phosphate: step 2/2. Functionally, catalytic subunit of the tagatose-1,6-bisphosphate aldolase GatYZ, which catalyzes the reversible aldol condensation of dihydroxyacetone phosphate (DHAP or glycerone-phosphate) with glyceraldehyde 3-phosphate (G3P) to produce tagatose 1,6-bisphosphate (TBP). Requires GatZ subunit for full activity and stability. Is involved in the catabolism of galactitol. This is D-tagatose-1,6-bisphosphate aldolase subunit GatY from Escherichia coli O8 (strain IAI1).